A 373-amino-acid polypeptide reads, in one-letter code: Alcohol dehydrogenase 2 (373 aa).

8 residues coordinate Zn(2+): C47, T49, H69, C99, C102, C105, C113, and C177. An alcohol contacts are provided by T49 and H69. T49 is a binding site for NAD(+). NAD(+) is bound by residues 202 to 207, D226, K231, T272, F316, and R366; that span reads GLGAVG.

This sequence belongs to the zinc-containing alcohol dehydrogenase family. As to quaternary structure, homodimer. The cofactor is Zn(2+).

It localises to the cytoplasm. The catalysed reaction is a primary alcohol + NAD(+) = an aldehyde + NADH + H(+). It catalyses the reaction a secondary alcohol + NAD(+) = a ketone + NADH + H(+). This chain is Alcohol dehydrogenase 2 (ADH2), found in Hordeum vulgare (Barley).